We begin with the raw amino-acid sequence, 359 residues long: UDP-3-O-acylglucosamine N-acyltransferase (359 aa).

His-247 (proton acceptor) is an active-site residue.

It belongs to the transferase hexapeptide repeat family. LpxD subfamily. As to quaternary structure, homotrimer.

It catalyses the reaction a UDP-3-O-[(3R)-3-hydroxyacyl]-alpha-D-glucosamine + a (3R)-hydroxyacyl-[ACP] = a UDP-2-N,3-O-bis[(3R)-3-hydroxyacyl]-alpha-D-glucosamine + holo-[ACP] + H(+). It functions in the pathway bacterial outer membrane biogenesis; LPS lipid A biosynthesis. Its function is as follows. Catalyzes the N-acylation of UDP-3-O-acylglucosamine using 3-hydroxyacyl-ACP as the acyl donor. Is involved in the biosynthesis of lipid A, a phosphorylated glycolipid that anchors the lipopolysaccharide to the outer membrane of the cell. The chain is UDP-3-O-acylglucosamine N-acyltransferase from Chlorobium chlorochromatii (strain CaD3).